A 346-amino-acid chain; its full sequence is Small ribosomal subunit biogenesis GTPase RsgA (346 aa).

Residues 1 to 25 are disordered; sequence MAKRKLTQNQTRRIQSNNAKTLHRH. Positions 7-20 are enriched in polar residues; it reads TQNQTRRIQSNNAK. One can recognise a CP-type G domain in the interval 103-271; the sequence is ENEISRPDYY…LIDSPGIREF (169 aa). GTP is bound by residues 159-162 and 213-221; these read NKVD and GQSGVGKSS. 4 residues coordinate Zn(2+): cysteine 295, cysteine 300, histidine 302, and cysteine 308.

This sequence belongs to the TRAFAC class YlqF/YawG GTPase family. RsgA subfamily. Monomer. Associates with 30S ribosomal subunit, binds 16S rRNA. Requires Zn(2+) as cofactor.

It localises to the cytoplasm. Functionally, one of several proteins that assist in the late maturation steps of the functional core of the 30S ribosomal subunit. Helps release RbfA from mature subunits. May play a role in the assembly of ribosomal proteins into the subunit. Circularly permuted GTPase that catalyzes slow GTP hydrolysis, GTPase activity is stimulated by the 30S ribosomal subunit. The chain is Small ribosomal subunit biogenesis GTPase RsgA from Haemophilus influenzae (strain ATCC 51907 / DSM 11121 / KW20 / Rd).